The chain runs to 187 residues: uncharacterized protein (187 aa).

The stretch at 127 to 172 forms a coiled coil; it reads KQPQVTLTQLQEELDEAKTRLALKEKELLEALSEISKLRLQLSNQL.

This is an uncharacterized protein from Tomato torrado virus (isolate Solanum lycopersicum/Spain/PRIToTV0301/-) (ToTV).